A 1233-amino-acid chain; its full sequence is Capping protein-inhibiting regulator of actin dynamics (1233 aa).

Residues serine 7, serine 28, and serine 132 each carry the phosphoserine modification. 3 disordered regions span residues 92–136 (AENK…SAGT), 157–224 (AKHK…RRRQ), and 269–527 (LLEE…WQEV). A compositionally biased stretch (basic residues) spans 157–176 (AKHKLAVKPKKQRVSKKHRR). Composition is skewed to basic and acidic residues over residues 200 to 211 (PGEDKPTWHEEE), 282 to 293 (EAERAPREEQQR), 302 to 322 (DAER…ERRR), and 329 to 362 (AEER…KRQE). Positions 321–472 (RRLQAQAQAE…EQQGRSGDFQ (152 aa)) are required for interaction with actin-capping proteins. Acidic residues-rich tracts occupy residues 363 to 376 (EEEA…EQQE) and 397 to 407 (EEEDLGEEEEE). Serine 420 carries the post-translational modification Phosphoserine. Composition is skewed to basic and acidic residues over residues 432–447 (DQER…HSEE) and 505–527 (VERK…WQEV). Residue serine 556 is modified to Phosphoserine. Threonine 559 carries the post-translational modification Phosphothreonine. Disordered stretches follow at residues 560-586 (PAKD…HALP), 629-788 (HAEA…TTEG), 815-1082 (EFTT…TEKV), and 1097-1186 (QKGF…ISDS). Positions 677-707 (KNAESDPRSSERDQLRPGDESTPRGRCDSRG) are enriched in basic and acidic residues. Positions 732–742 (GTETSKQSTEA) are enriched in polar residues. Residues 768 to 783 (ELGKGPEKSEMHREPA) are compositionally biased toward basic and acidic residues. Composition is skewed to polar residues over residues 815–825 (EFTTSSDSETA) and 852–863 (TNYSLRFNCDQQ). Residues 876-889 (GDSADAGPPAAGSA) show a composition bias toward low complexity. Residues 908–921 (QERKQAPSTRRDSA) show a composition bias toward basic and acidic residues. Residues 956 to 967 (PLAQKPALAPKP) are compositionally biased toward low complexity. Threonine 971 carries the phosphothreonine modification. Phosphoserine occurs at positions 975 and 1017. Over residues 994–1040 (GRPDPEPSEPSKEDQESSDRRPPSPPGPEERKGQKRDEEEEATERKP) the composition is skewed to basic and acidic residues. Residues 1047–1057 (ATQQEKPSQTP) are compositionally biased toward polar residues. Composition is skewed to basic and acidic residues over residues 1059 to 1082 (AGRK…TEKV) and 1099 to 1124 (GFRE…KLSK). Over residues 1127–1139 (VSVSVQPGSSSVS) the composition is skewed to low complexity. Residues 1151-1170 (PEEKRPETAVSRLERREQLK) are compositionally biased toward basic and acidic residues. Positions 1174–1183 (TLPTSVTVEI) are enriched in polar residues.

In terms of assembly, directly interacts with actin-capping proteins CAPZA1, CAPZA2 and CAPZB; this interaction decreases the binding of capping proteins to actin. Expressed in intestinal epithelial cells (at protein level).

It is found in the cytoplasm. The protein localises to the cytosol. Functionally, involved in epithelial cell integrity by acting on the maintenance of the actin cytoskeleton. Positively regulates the actin polymerization, by inhibiting the interaction of actin-capping proteins with actin. The polypeptide is Capping protein-inhibiting regulator of actin dynamics (Homo sapiens (Human)).